The sequence spans 229 residues: N-acetyltransferase MPR1 (229 aa).

The N-acetyltransferase domain occupies 65-219 (FNLEIESGKT…DAIIYGKDLT (155 aa)). N135 lines the substrate pocket. A CoA-binding site is contributed by 145 to 150 (RGQKVG). 172 to 173 (NL) contacts substrate.

This sequence belongs to the acetyltransferase family. As to quaternary structure, homodimer. In terms of processing, not glycosylated.

The protein resides in the cytoplasm. It is found in the mitochondrion. It carries out the reaction L-glutamate 5-semialdehyde + acetyl-CoA = N-acetyl-L-glutamate 5-semialdehyde + CoA + H(+). In terms of biological role, N-acetyltransferase involved in oxidative stress resistance. Acetylates the toxic proline metabolism intermediate (S)-1-pyrroline-5-carboxylate (P5C), or more likely its spontaneously forming tautomer glutamate-5-semialdehyde (GSA) into N-acetyl-GSA for arginine synthesis in the mitochondria. P5C has been shown to increase the levels of reactive oxygen species (ROS) in the cell by inhibiting the function of the respiratory chain in the mitochondria. The enzyme is able to reduce intracellular ROS levels under P5C-induced oxidative stress and protects cells from damage by oxidative stress. Also acetylates and thereby detoxifies the proline analog azetidine-2-carboxylate (AZC), however it is unlikely that AZC is a natural substrate as it occurs only in plants belonging to the Lilaceae family. Does not acetylate proline. The chain is N-acetyltransferase MPR1 from Saccharomyces cerevisiae (Baker's yeast).